Here is a 232-residue protein sequence, read N- to C-terminus: Putative N-acetylmannosamine-6-phosphate 2-epimerase (232 aa).

The protein belongs to the NanE family.

The enzyme catalyses an N-acyl-D-glucosamine 6-phosphate = an N-acyl-D-mannosamine 6-phosphate. Its pathway is amino-sugar metabolism; N-acetylneuraminate degradation; D-fructose 6-phosphate from N-acetylneuraminate: step 3/5. Functionally, converts N-acetylmannosamine-6-phosphate (ManNAc-6-P) to N-acetylglucosamine-6-phosphate (GlcNAc-6-P). The chain is Putative N-acetylmannosamine-6-phosphate 2-epimerase from Borreliella afzelii (strain PKo) (Borrelia afzelii).